The sequence spans 446 residues: Exodeoxyribonuclease 7 large subunit (446 aa).

This sequence belongs to the XseA family. In terms of assembly, heterooligomer composed of large and small subunits.

The protein localises to the cytoplasm. It carries out the reaction Exonucleolytic cleavage in either 5'- to 3'- or 3'- to 5'-direction to yield nucleoside 5'-phosphates.. Its function is as follows. Bidirectionally degrades single-stranded DNA into large acid-insoluble oligonucleotides, which are then degraded further into small acid-soluble oligonucleotides. The sequence is that of Exodeoxyribonuclease 7 large subunit from Streptococcus pneumoniae serotype 19F (strain G54).